Reading from the N-terminus, the 276-residue chain is MGKGPGLYTEIGKKARDLLYKDYQSDHKFSITTYSPTGVVITSSGSKKGDLFLADVNTQLKNKNVTTDIKVDTNSNLFTTITVDEAAPGLKTILSFRVPDQRSGKLEVQYLHDYAGICTSVGLTANPIVNFSGVVGTNIIALGTDVSFDTKTGDFTKCNAGLSFTNADLVASLNLNNKGDNLTASYYHTVSPLTSTAVGAEVNHSFSTNENIITVGTQHRLDPLTSVKARINNFGKASALLQHEWRPKSLFTVSGEVDTKSVDKGAKFGLALALKP.

This sequence belongs to the eukaryotic mitochondrial porin (TC 1.B.8.1) family.

The protein resides in the mitochondrion outer membrane. In terms of biological role, forms a channel through the cell membrane that allows diffusion of small hydrophilic molecules. The channel adopts an open conformation at low or zero membrane potential and a closed conformation at potentials above 30-40 mV. The open state has a weak anion selectivity whereas the closed state is cation-selective. This is Mitochondrial outer membrane protein porin of 34 kDa from Solanum tuberosum (Potato).